The primary structure comprises 411 residues: Lissencephaly-1 homolog (411 aa).

Residues 9–41 (QREELNQAIADYLGSNGYADSLETFRKEADLST) form the LisH domain. Positions 56–83 (TSVIRLQKKVMDLEAKLTEAEKEVIEGA) form a coiled coil. 7 WD repeats span residues 106 to 147 (GHRA…RSLK), 148 to 187 (GHTD…ECVK), 191 to 230 (GHDH…CVKT), 233 to 272 (GHRE…CKVE), 275 to 334 (DHEH…CLLT), 337 to 376 (GHDN…CMKT), and 379 to 411 (AHQH…WECR).

Belongs to the WD repeat LIS1/nudF family.

Its subcellular location is the cytoplasm. The protein resides in the cytoskeleton. It localises to the microtubule organizing center. The protein localises to the centrosome. In terms of biological role, positively regulates the activity of the minus-end directed microtubule motor protein dynein. May enhance dynein-mediated microtubule sliding by targeting dynein to the microtubule plus end. Required for several dynein- and microtubule-dependent processes. The chain is Lissencephaly-1 homolog from Drosophila mojavensis (Fruit fly).